A 211-amino-acid polypeptide reads, in one-letter code: Protein-L-isoaspartate O-methyltransferase (211 aa).

Ser-62 is an active-site residue.

It belongs to the methyltransferase superfamily. L-isoaspartyl/D-aspartyl protein methyltransferase family.

Its subcellular location is the cytoplasm. It carries out the reaction [protein]-L-isoaspartate + S-adenosyl-L-methionine = [protein]-L-isoaspartate alpha-methyl ester + S-adenosyl-L-homocysteine. Its function is as follows. Catalyzes the methyl esterification of L-isoaspartyl residues in peptides and proteins that result from spontaneous decomposition of normal L-aspartyl and L-asparaginyl residues. It plays a role in the repair and/or degradation of damaged proteins. The protein is Protein-L-isoaspartate O-methyltransferase of Shewanella amazonensis (strain ATCC BAA-1098 / SB2B).